The following is a 62-amino-acid chain: LKCHNTQLPFIYKTCPEGKNLCFKTTLKKLPLKIPIKRGCAATCPKSSALLKVVCCSTDKCN.

4 cysteine pairs are disulfide-bonded: cysteine 3/cysteine 22, cysteine 15/cysteine 40, cysteine 44/cysteine 55, and cysteine 56/cysteine 61.

It belongs to the three-finger toxin family. Short-chain subfamily. Orphan group XV sub-subfamily. In terms of tissue distribution, expressed by the venom gland.

Its subcellular location is the secreted. It is found in the target cell membrane. Its function is as follows. Has low cytotoxic activity. The protein is Cytotoxin 11 of Naja annulifera (Banded Egyptian cobra).